We begin with the raw amino-acid sequence, 459 residues long: Cysteine--tRNA ligase (459 aa).

Cys28 provides a ligand contact to Zn(2+). Positions Val30–His40 match the 'HIGH' region motif. Zn(2+)-binding residues include Cys209, His234, and Glu238. Residues Lys266–Ser270 carry the 'KMSKS' region motif. Lys269 is a binding site for ATP.

This sequence belongs to the class-I aminoacyl-tRNA synthetase family. As to quaternary structure, monomer. It depends on Zn(2+) as a cofactor.

Its subcellular location is the cytoplasm. It catalyses the reaction tRNA(Cys) + L-cysteine + ATP = L-cysteinyl-tRNA(Cys) + AMP + diphosphate. The polypeptide is Cysteine--tRNA ligase (Histophilus somni (strain 129Pt) (Haemophilus somnus)).